Reading from the N-terminus, the 244-residue chain is UPF0280 protein Msp_1322 (244 aa).

It belongs to the UPF0280 family.

The protein is UPF0280 protein Msp_1322 of Methanosphaera stadtmanae (strain ATCC 43021 / DSM 3091 / JCM 11832 / MCB-3).